The primary structure comprises 60 residues: Large ribosomal subunit protein bL32 (60 aa).

Residues 1–23 (MAKHPVPKKKTSKSKRDMRRSHH) show a composition bias toward basic residues. The disordered stretch occupies residues 1 to 34 (MAKHPVPKKKTSKSKRDMRRSHHALTAPNLTECP). The Zn(2+) site is built by cysteine 33, cysteine 36, cysteine 46, and cysteine 49. The segment at 33-49 (CPQCHGKKLSHHICPNC) adopts a C4-type zinc-finger fold.

It belongs to the bacterial ribosomal protein bL32 family. As to quaternary structure, part of the 50S ribosomal subunit. Contacts proteins L17 and L22. Requires Zn(2+) as cofactor.

Forms a cluster with L17 and L22, and with L22, a pair of 'tweezers' that hold together all the domains of the 23S rRNA. Interacts with the antibiotic troleandomycin which blocks the peptide exit tunnel. This is Large ribosomal subunit protein bL32 (rpmF) from Deinococcus radiodurans (strain ATCC 13939 / DSM 20539 / JCM 16871 / CCUG 27074 / LMG 4051 / NBRC 15346 / NCIMB 9279 / VKM B-1422 / R1).